The following is a 1400-amino-acid chain: DNA-directed RNA polymerase subunit beta' (1400 aa).

4 residues coordinate Zn(2+): C70, C72, C85, and C88. Residues D460, D462, and D464 each coordinate Mg(2+). The Zn(2+) site is built by C814, C888, C895, and C898.

This sequence belongs to the RNA polymerase beta' chain family. As to quaternary structure, the RNAP catalytic core consists of 2 alpha, 1 beta, 1 beta' and 1 omega subunit. When a sigma factor is associated with the core the holoenzyme is formed, which can initiate transcription. Mg(2+) is required as a cofactor. The cofactor is Zn(2+).

The enzyme catalyses RNA(n) + a ribonucleoside 5'-triphosphate = RNA(n+1) + diphosphate. DNA-dependent RNA polymerase catalyzes the transcription of DNA into RNA using the four ribonucleoside triphosphates as substrates. This chain is DNA-directed RNA polymerase subunit beta', found in Vibrio vulnificus (strain CMCP6).